The sequence spans 102 residues: Large ribosomal subunit protein bL21 (102 aa).

This sequence belongs to the bacterial ribosomal protein bL21 family. In terms of assembly, part of the 50S ribosomal subunit. Contacts protein L20.

This protein binds to 23S rRNA in the presence of protein L20. In Latilactobacillus sakei subsp. sakei (strain 23K) (Lactobacillus sakei subsp. sakei), this protein is Large ribosomal subunit protein bL21.